The chain runs to 148 residues: Deoxyuridine 5'-triphosphate nucleotidohydrolase (148 aa).

Substrate-binding positions include 67–69 (RSG), asparagine 80, 84–86 (TID), and lysine 94.

This sequence belongs to the dUTPase family. It depends on Mg(2+) as a cofactor.

The enzyme catalyses dUTP + H2O = dUMP + diphosphate + H(+). It participates in pyrimidine metabolism; dUMP biosynthesis; dUMP from dCTP (dUTP route): step 2/2. This enzyme is involved in nucleotide metabolism: it produces dUMP, the immediate precursor of thymidine nucleotides and it decreases the intracellular concentration of dUTP so that uracil cannot be incorporated into DNA. This Orientia tsutsugamushi (strain Boryong) (Rickettsia tsutsugamushi) protein is Deoxyuridine 5'-triphosphate nucleotidohydrolase.